A 628-amino-acid polypeptide reads, in one-letter code: UvrABC system protein C (628 aa).

One can recognise a GIY-YIG domain in the interval 21–100 (TGPGIYQFKN…IKELKPRYNV (80 aa)). The UVR domain occupies 214–249 (AGLLKELHEKMLTAAAELRFEEAAELKMQLQSLRRY).

Belongs to the UvrC family. Interacts with UvrB in an incision complex.

It localises to the cytoplasm. Its function is as follows. The UvrABC repair system catalyzes the recognition and processing of DNA lesions. UvrC both incises the 5' and 3' sides of the lesion. The N-terminal half is responsible for the 3' incision and the C-terminal half is responsible for the 5' incision. The polypeptide is UvrABC system protein C (Chlorobium luteolum (strain DSM 273 / BCRC 81028 / 2530) (Pelodictyon luteolum)).